The chain runs to 94 residues: Serine protease inhibitor Kazal-type 13 (94 aa).

The signal sequence occupies residues M1–S23. The Kazal-like domain maps to R33–D94. 3 disulfide bridges follow: C39–C75, C53–C72, and C61–C93. N55 carries an N-linked (GlcNAc...) asparagine glycan.

It is found in the secreted. Its function is as follows. May be a serine protease inhibitor. Essential for sperm maturation and fertility. Inhibits sperm acrosome reaction, protecting sperm from premature reaction. The polypeptide is Serine protease inhibitor Kazal-type 13 (SPINK13) (Homo sapiens (Human)).